A 223-amino-acid polypeptide reads, in one-letter code: Ribosomal RNA small subunit methyltransferase Nep1 (223 aa).

S-adenosyl-L-methionine-binding positions include glycine 181, glycine 186, and 199 to 204; that span reads LYREPL.

The protein belongs to the class IV-like SAM-binding methyltransferase superfamily. RNA methyltransferase NEP1 family. Homodimer.

The enzyme catalyses a pseudouridine in rRNA + S-adenosyl-L-methionine = an N(1)-methylpseudouridine in rRNA + S-adenosyl-L-homocysteine + H(+). Methyltransferase involved in ribosomal biogenesis. Specifically catalyzes the N1-methylation of the pseudouridine corresponding to position 914 in M.jannaschii 16S rRNA. This is Ribosomal RNA small subunit methyltransferase Nep1 from Pyrococcus furiosus (strain ATCC 43587 / DSM 3638 / JCM 8422 / Vc1).